The following is a 351-amino-acid chain: uncharacterized protein (351 aa).

The 56-residue stretch at 14-69 folds into the HTH lacI-type domain; the sequence is PRLADIAAQAQVSEATASRVLNGRPASRXSTRQRVLAALDLLGYERPTRLRRRSAG. A DNA-binding region (H-T-H motif) is located at residues 16 to 35; the sequence is LADIAAQAQVSEATASRVLN.

Its function is as follows. Putative sugar-binding regulatory protein for the alpha-amylase gene. This is an uncharacterized protein from Streptomyces limosus (Streptomyces albidoflavus).